A 510-amino-acid polypeptide reads, in one-letter code: MCGILGIVLANQTTPVAPELCDGCIFLQHRGQDAAGIATCGSRGRIYQCKGNGMARDVFTQQRVSGLAGSMGIAHLRYPTAGSSANSEAQPFYVNSPYGINLAHNGNLVNTASLKRYMDEDVHRHINTDSDSELLLNIFAAELEKHNKYRVNNEDVFHALEGVYRLCRGGYACVGLLAGFALFGFRDPNGIRPLLFGERENPDGTKDYMLASESVVFKAHNFTKYRDLKPGEAVIIPKNCSKGEPEFKQVVPINSYRPDLFEYVYFARPDSVLDGISVYHTRLAMGSKLAENILKQLKPEDIDVVIPVPDTARTCALECANVLGKPYREGFVKNRYVGRTFIMPNQRERVSSVRRKLNPMESEFKGKKVLIVDDSIVRGTTSKEIVNMAKESGATKVYFASAAPAIRYNHIYGIDLTDTKNLIAYNRTDEEVAEVIGCERVIYQSLEDLIDCCKTDKITKFEDGVFTGNYVTGVEDGYIQELEEKRESIANNSSDMKAEVDIGLYNCADY.

Cys-2 (nucleophile) is an active-site residue. The Glutamine amidotransferase type-2 domain maps to 2–239 (CGILGIVLAN…PGEAVIIPKN (238 aa)). Positions 373 and 374 each coordinate Mg(2+).

This sequence in the C-terminal section; belongs to the purine/pyrimidine phosphoribosyltransferase family. It depends on Mg(2+) as a cofactor.

It carries out the reaction 5-phospho-beta-D-ribosylamine + L-glutamate + diphosphate = 5-phospho-alpha-D-ribose 1-diphosphate + L-glutamine + H2O. Its pathway is purine metabolism; IMP biosynthesis via de novo pathway; N(1)-(5-phospho-D-ribosyl)glycinamide from 5-phospho-alpha-D-ribose 1-diphosphate: step 1/2. The protein is Amidophosphoribosyltransferase (ADE4) of Saccharomyces cerevisiae (strain ATCC 204508 / S288c) (Baker's yeast).